Here is a 110-residue protein sequence, read N- to C-terminus: Protein mistic (110 aa).

Over Met-1 to Glu-7 the chain is Cytoplasmic. Residues Lys-8–Gly-22 form a helical membrane-spanning segment. Residues Val-23 to Ser-31 are Extracellular-facing. A helical membrane pass occupies residues Glu-32–Tyr-55. At Asn-56–Gln-66 the chain is on the cytoplasmic side. A helical membrane pass occupies residues Leu-67 to Met-81. The Extracellular portion of the chain corresponds to Tyr-82 to Asn-88. Residues Glu-89–Ser-102 form a helical membrane-spanning segment. Over Val-103 to Glu-110 the chain is Cytoplasmic.

Monomer.

It localises to the cell membrane. Its function is as follows. Chaperone that facilitates the production and integration of integral membrane proteins into the bacterial lipid bilayer. The polypeptide is Protein mistic (mstX) (Bacillus subtilis (strain 168)).